We begin with the raw amino-acid sequence, 781 residues long: Mitochondrial inner membrane m-AAA protease component paraplegin (781 aa).

A mitochondrion-targeting transit peptide spans M1–Y43. The propeptide at V44–G105 is removed in mature form. The segment at G105–E134 is disordered. Topologically, residues L106 to T144 are mitochondrial matrix. Positions K109–E134 are enriched in basic and acidic residues. The helical transmembrane segment at L145–I165 threads the bilayer. The Mitochondrial intermembrane portion of the chain corresponds to S166–T248. Residues G249 to W269 form a helical membrane-spanning segment. Topologically, residues Y270–P781 are mitochondrial matrix. Residues A312, G352, C353, G354, K355, T356, and L357 each coordinate ATP. Y505 is subject to 3'-nitrotyrosine. Zn(2+) is bound at residue H574. Residue E575 is part of the active site. Residues H578 and D650 each contribute to the Zn(2+) site. The interval H701–P781 is interaction with PPIF.

In the N-terminal section; belongs to the AAA ATPase family. This sequence in the C-terminal section; belongs to the peptidase M41 family. In terms of assembly, forms heterooligomers with AFG3L2; the m-AAA protease is composed of heterohexamers of AFG3L2 and SPG7. Component of the mitochondrial permeability transition pore complex (mPTPC), at least composed of SPG7, VDAC1 and PPIF. Interacts with MAIP1. Requires Zn(2+) as cofactor. Upon import into the mitochondrion, the N-terminal transit peptide is cleaved by the mitochondrial-processing peptidase (MPP) to generate an intermediate form which undergoes a second proteolytic cleavage mediated by proteases AFG3L2 removing an additional N-terminal fragment to generate the proteolytically active mature form.

It is found in the mitochondrion inner membrane. It catalyses the reaction ATP + H2O = ADP + phosphate + H(+). Functionally, catalytic component of the m-AAA protease, a protease that plays a key role in proteostasis of inner mitochondrial membrane proteins, and which is essential for axonal and neuron development. SPG7 possesses both ATPase and protease activities: the ATPase activity is required to unfold substrates, threading them into the internal proteolytic cavity for hydrolysis into small peptide fragments. The m-AAA protease exerts a dual role in the mitochondrial inner membrane: it mediates the processing of specific regulatory proteins and ensures protein quality control by degrading misfolded polypeptides. Mediates protein maturation of the mitochondrial ribosomal subunit MRPL32/bL32m by catalyzing the cleavage of the presequence of MRPL32/bL32m prior to assembly into the mitochondrial ribosome. Acts as a regulator of calcium in neurons by mediating degradation of SMDT1/EMRE before its assembly with the uniporter complex, limiting the availability of SMDT1/EMRE for MCU assembly and promoting efficient assembly of gatekeeper subunits with MCU. Also regulates mitochondrial calcium by catalyzing degradation of MCU. Plays a role in the formation and regulation of the mitochondrial permeability transition pore (mPTP) and its proteolytic activity is dispensable for this function. This chain is Mitochondrial inner membrane m-AAA protease component paraplegin (Spg7), found in Rattus norvegicus (Rat).